Consider the following 464-residue polypeptide: DNA primase DnaG (464 aa).

The 75-residue stretch at 171–245 folds into the Toprim domain; the sequence is DTIIIVEGRA…DIDYVARAPK (75 aa). The Mg(2+) site is built by Glu-177, Asp-219, and Asp-221.

Belongs to the archaeal DnaG primase family. In terms of assembly, forms a ternary complex with MCM helicase and DNA. Mg(2+) is required as a cofactor.

The enzyme catalyses ssDNA + n NTP = ssDNA/pppN(pN)n-1 hybrid + (n-1) diphosphate.. In terms of biological role, RNA polymerase that catalyzes the synthesis of short RNA molecules used as primers for DNA polymerase during DNA replication. In Methanococcus aeolicus (strain ATCC BAA-1280 / DSM 17508 / OCM 812 / Nankai-3), this protein is DNA primase DnaG.